We begin with the raw amino-acid sequence, 305 residues long: Regulator of microtubule dynamics protein 1 (305 aa).

At Lys160 the chain carries N6-succinyllysine. 2 TPR repeats span residues 163–199 (AICI…NPKD) and 217–253 (PWYQ…DPNF). The residue at position 245 (Lys245) is an N6-succinyllysine.

Belongs to the RMDN family. In terms of assembly, interacts with microtubules.

The protein localises to the cytoplasm. Its subcellular location is the cytoskeleton. The protein resides in the spindle. It localises to the spindle pole. The polypeptide is Regulator of microtubule dynamics protein 1 (Rmdn1) (Mus musculus (Mouse)).